Here is a 469-residue protein sequence, read N- to C-terminus: Glutamate--tRNA ligase 1 (469 aa).

The 'HIGH' region motif lies at 10–20 (PSPTGYLHIGG). 4 residues coordinate Zn(2+): C99, C101, C126, and D128. Residues 237–241 (RLSKR) carry the 'KMSKS' region motif. K240 contributes to the ATP binding site.

The protein belongs to the class-I aminoacyl-tRNA synthetase family. Glutamate--tRNA ligase type 1 subfamily. Monomer. The cofactor is Zn(2+).

The protein resides in the cytoplasm. It carries out the reaction tRNA(Glu) + L-glutamate + ATP = L-glutamyl-tRNA(Glu) + AMP + diphosphate. Its function is as follows. Catalyzes the attachment of glutamate to tRNA(Glu) in a two-step reaction: glutamate is first activated by ATP to form Glu-AMP and then transferred to the acceptor end of tRNA(Glu). The protein is Glutamate--tRNA ligase 1 of Coxiella burnetii (strain RSA 331 / Henzerling II).